The sequence spans 480 residues: Endoplasmic reticulum lectin 1 (480 aa).

The first 27 residues, 1–27 (MRRSDRFPCAGASLLVVLCGVFPSSFG), serve as a signal peptide directing secretion. MRH domains follow at residues 108–245 (SSCS…LCNH) and 339–466 (SYCF…ICKI). A disulfide bridge links Cys-110 with Cys-123. The tract at residues 152-172 (VKKSPSEAGENQEDKERTEGH) is disordered. Residues 163–172 (QEDKERTEGH) are compositionally biased toward basic and acidic residues. Disulfide bonds link Cys-198/Cys-231, Cys-214/Cys-243, Cys-341/Cys-354, Cys-418/Cys-452, and Cys-433/Cys-464.

The protein localises to the endoplasmic reticulum lumen. In terms of biological role, probable lectin that binds selectively to improperly folded lumenal proteins. May function in endoplasmic reticulum quality control and endoplasmic reticulum-associated degradation (ERAD) of both non-glycosylated proteins and glycoproteins. This is Endoplasmic reticulum lectin 1 (erlec1) from Xenopus laevis (African clawed frog).